The sequence spans 173 residues: Mesencephalic astrocyte-derived neurotrophic factor homolog (173 aa).

The N-terminal stretch at 1–22 (MKTWYMVVVIGFLATLVQTSLA) is a signal peptide. 4 cysteine pairs are disulfide-bonded: C28/C114, C31/C103, C61/C72, and C148/C151.

It belongs to the ARMET family.

Its subcellular location is the secreted. Functionally, required during the maturation of the embryonic nervous system for maintenance of neuronal and cuticular connectivity. Essential for maintenance of dopaminergic neurons and dopamine levels. This chain is Mesencephalic astrocyte-derived neurotrophic factor homolog, found in Drosophila yakuba (Fruit fly).